A 138-amino-acid polypeptide reads, in one-letter code: Augmin complex subunit msd1 (138 aa).

As to quaternary structure, component of the augmin complex composed of dgt2, dgt3, dgt4, dgt5, dgt6, msd1, msd5 and wac. The complex interacts directly or indirectly with microtubules and is required for centrosome-independent generation of spindle microtubules.

Its subcellular location is the cytoplasm. It localises to the cytoskeleton. The protein resides in the spindle. Its function is as follows. As part of the augmin complex, plays a role in centrosome-independent generation of spindle microtubules. The complex is required for mitotic spindle assembly through its involvement in localizing gamma-tubulin to spindle microtubules. msd1 is required for microtubule nucleation from within the mitotic spindle and for localization of Grip71 to centrosomes and mitotic spindle. The protein is Augmin complex subunit msd1 of Drosophila melanogaster (Fruit fly).